We begin with the raw amino-acid sequence, 361 residues long: MERITVNLGERSYPISIGAGLFANPALLSLSAKQKVVIVTNHTVAPLYAPAIISLLDHIGCQHALLELPDGEQYKTLETFNTVMSFLLEHNYSRDVVVIALGGGVIGDLVGFAAACYQRGVDFIQIPTTLLSQVDSSVGGKTAVNHPLGKNMIGAFYQPKAVVIDTDCLTTLPAREFAAGMAEVIKYGIIYDSAFFDWLEAQMEALYALDEQALTYAIARCCQIKAEVVAQDEKESGIRALLNLGHTFGHAIEAHMGYGNWLHGEAVSAGTVMAAKTAQLQGLIDASQFERILAILKKAHLPVRTPENMTFADFMQHMMRDKKVLAGELRLVLPTSIGTSAVVKGVPEAVIAQAIEYCRTV.

NAD(+) contacts are provided by residues Asn41, 70–75, 104–108, 128–129, Lys141, Lys150, 150–151, and 168–171; these read DGEQYK, GVIGD, TT, KN, and CLTT. The Zn(2+) site is built by Glu183, His246, and His263.

This sequence belongs to the sugar phosphate cyclases superfamily. Dehydroquinate synthase family. It depends on NAD(+) as a cofactor. Co(2+) is required as a cofactor. Requires Zn(2+) as cofactor.

Its subcellular location is the cytoplasm. The catalysed reaction is 7-phospho-2-dehydro-3-deoxy-D-arabino-heptonate = 3-dehydroquinate + phosphate. The protein operates within metabolic intermediate biosynthesis; chorismate biosynthesis; chorismate from D-erythrose 4-phosphate and phosphoenolpyruvate: step 2/7. Catalyzes the conversion of 3-deoxy-D-arabino-heptulosonate 7-phosphate (DAHP) to dehydroquinate (DHQ). In Vibrio cholerae serotype O1 (strain ATCC 39315 / El Tor Inaba N16961), this protein is 3-dehydroquinate synthase.